A 248-amino-acid chain; its full sequence is tRNA pseudouridine synthase A (248 aa).

The Nucleophile role is filled by D53. Y116 lines the substrate pocket.

Belongs to the tRNA pseudouridine synthase TruA family. As to quaternary structure, homodimer.

The catalysed reaction is uridine(38/39/40) in tRNA = pseudouridine(38/39/40) in tRNA. In terms of biological role, formation of pseudouridine at positions 38, 39 and 40 in the anticodon stem and loop of transfer RNAs. In Helicobacter hepaticus (strain ATCC 51449 / 3B1), this protein is tRNA pseudouridine synthase A.